The following is a 114-amino-acid chain: Iron-sulfur cluster assembly protein CyaY (114 aa).

This sequence belongs to the frataxin family.

Involved in iron-sulfur (Fe-S) cluster assembly. May act as a regulator of Fe-S biogenesis. In Ralstonia pickettii (strain 12J), this protein is Iron-sulfur cluster assembly protein CyaY.